The chain runs to 375 residues: Period circadian protein (375 aa).

3 disordered regions span residues 27-119 (VTAP…VPPV), 140-189 (KHRE…WEGE), and 219-255 (KCQA…QYTQ). Over residues 69–91 (SGNFTTGSNLHMSSVTNTSNAGT) the composition is skewed to low complexity. Residues 92 to 113 (GTSGTGNSGGGGGGGGGAGPGN) are compositionally biased toward gly residues. A compositionally biased stretch (basic and acidic residues) spans 145–156 (RGRSGEKNKKSA). The span at 224–243 (GAGGGGSGSVGGTGNIGSGG) shows a compositional bias: gly residues. Positions 245–255 (NAQPSTNQYTQ) are enriched in polar residues.

As to quaternary structure, forms a heterodimer with timeless (TIM); the complex then translocates into the nucleus. In terms of processing, phosphorylated with a circadian rhythmicity, probably by the double-time protein (dbt). Phosphorylation could be implicated in the stability of per monomer and in the formation of heterodimer per-tim.

The protein resides in the nucleus. It localises to the cytoplasm. Its subcellular location is the perinuclear region. Its function is as follows. Essential for biological clock functions. Determines the period length of circadian and ultradian rhythms; an increase in PER dosage leads to shortened circadian rhythms and a decrease leads to lengthened circadian rhythms. Essential for the circadian rhythmicity of locomotor activity, eclosion behavior, and for the rhythmic component of the male courtship song that originates in the thoracic nervous system. The biological cycle depends on the rhythmic formation and nuclear localization of the TIM-PER complex. Light induces the degradation of TIM, which promotes elimination of PER. Nuclear activity of the heterodimer coordinatively regulates PER and TIM transcription through a negative feedback loop. Behaves as a negative element in circadian transcriptional loop. Does not appear to bind DNA, suggesting indirect transcriptional inhibition. In Drosophila sucinea (Fruit fly), this protein is Period circadian protein (per).